Reading from the N-terminus, the 379-residue chain is Histidinol-phosphate aminotransferase (379 aa).

Position 236 is an N6-(pyridoxal phosphate)lysine (Lys-236).

The protein belongs to the class-II pyridoxal-phosphate-dependent aminotransferase family. Histidinol-phosphate aminotransferase subfamily. Homodimer. Pyridoxal 5'-phosphate serves as cofactor.

It carries out the reaction L-histidinol phosphate + 2-oxoglutarate = 3-(imidazol-4-yl)-2-oxopropyl phosphate + L-glutamate. It functions in the pathway amino-acid biosynthesis; L-histidine biosynthesis; L-histidine from 5-phospho-alpha-D-ribose 1-diphosphate: step 7/9. This chain is Histidinol-phosphate aminotransferase, found in Desulfotalea psychrophila (strain LSv54 / DSM 12343).